Consider the following 774-residue polypeptide: Effector protein hopW1-1 (774 aa).

2 disordered regions span residues 1–33 and 301–340; these read MSPA…QSPQ and CQAG…VPGQ. The segment covering 9-23 has biased composition (low complexity); it reads TPHSFPPSFTGTSSS. Residues 24–33 show a composition bias toward polar residues; that stretch reads AENSHAQSPQ.

The protein belongs to the HopW family. In terms of assembly, interacts (via C-terminus) with Arabidopsis WIN1, WIN2 and WIN3.

The protein localises to the secreted. Functionally, induces hypersensitive response (HR). The chain is Effector protein hopW1-1 (hopW1-1) from Pseudomonas syringae pv. maculicola.